We begin with the raw amino-acid sequence, 152 residues long: Snaclec 5 (152 aa).

The N-terminal stretch at 1 to 23 (MGRFIFLSSGLLVVFLSLSGTGA) is a signal peptide. 3 cysteine pairs are disulfide-bonded: C27–C38, C55–C148, and C123–C140. One can recognise a C-type lectin domain in the interval 34–149 (YGQHCYRAFK…CASHNPFVCK (116 aa)).

The protein belongs to the snaclec family. As to quaternary structure, heterodimer; disulfide-linked. Expressed by the venom gland.

It is found in the secreted. Its function is as follows. Interferes with one step of hemostasis (modulation of platelet aggregation, or coagulation cascade, for example). The polypeptide is Snaclec 5 (Bitis arietans (African puff adder)).